Here is a 337-residue protein sequence, read N- to C-terminus: Inositol 2-dehydrogenase (337 aa).

Belongs to the Gfo/Idh/MocA family. Homotetramer.

It carries out the reaction myo-inositol + NAD(+) = scyllo-inosose + NADH + H(+). Functionally, involved in the oxidation of myo-inositol (MI) to 2-keto-myo-inositol (2KMI or 2-inosose). The sequence is that of Inositol 2-dehydrogenase from Burkholderia multivorans (strain ATCC 17616 / 249).